Consider the following 1090-residue polypeptide: Aminopeptidase-like protein AC3.5 (1090 aa).

Over 1–77 the chain is Cytoplasmic; sequence MEDVDLGKDR…KPKKRIACSP (77 aa). The segment covering 21 to 33 has biased composition (low complexity); sequence GNGSASNLNNRNN. The interval 21-71 is disordered; it reads GNGSASNLNNRNNIPLSEKAAKEPLQTQPQEAPPAPKPKVQKQKPPVKPKK. Over residues 59 to 71 the composition is skewed to basic residues; it reads KVQKQKPPVKPKK. Residues 78 to 98 traverse the membrane as a helical; Signal-anchor for type II membrane protein segment; the sequence is GSAICLFLLAVAAIIFAAFLG. The Lumenal segment spans residues 99–1090; sequence HYLTKQNYEM…DEMESSEEQE (992 aa). N115, N123, N143, N176, and N230 each carry an N-linked (GlcNAc...) asparagine glycan. Residues 217-259 form a disordered region; that stretch reads VTKRAKKSVDSGTNSTSEMPEGSGEEAMATTATTTTTESTTPV. Positions 241 to 257 are enriched in low complexity; it reads EEAMATTATTTTTESTT. 8 N-linked (GlcNAc...) asparagine glycosylation sites follow: N402, N710, N723, N789, N894, N919, N964, and N993. The segment covering 1069–1080 has biased composition (basic and acidic residues); sequence YLDGKMKGPAKD. Residues 1069 to 1090 form a disordered region; it reads YLDGKMKGPAKDDEMESSEEQE. Residues 1081–1090 show a composition bias toward acidic residues; the sequence is DEMESSEEQE.

This sequence belongs to the peptidase M1 family.

It is found in the membrane. This chain is Aminopeptidase-like protein AC3.5, found in Caenorhabditis elegans.